The primary structure comprises 322 residues: DNA repair and recombination protein RadA (322 aa).

105-112 (GMYGSGKT) contacts ATP.

It belongs to the eukaryotic RecA-like protein family.

Its function is as follows. Involved in DNA repair and in homologous recombination. Binds and assemble on single-stranded DNA to form a nucleoprotein filament. Hydrolyzes ATP in a ssDNA-dependent manner and promotes DNA strand exchange between homologous DNA molecules. The polypeptide is DNA repair and recombination protein RadA (Methanococcus maripaludis (strain C7 / ATCC BAA-1331)).